Consider the following 249-residue polypeptide: 5'-nucleotidase SurE (249 aa).

The a divalent metal cation site is built by Asp8, Asp9, Ser39, and Asn96.

It belongs to the SurE nucleotidase family. Requires a divalent metal cation as cofactor.

It localises to the cytoplasm. The catalysed reaction is a ribonucleoside 5'-phosphate + H2O = a ribonucleoside + phosphate. Functionally, nucleotidase that shows phosphatase activity on nucleoside 5'-monophosphates. In Clostridium tetani (strain Massachusetts / E88), this protein is 5'-nucleotidase SurE.